The chain runs to 156 residues: Small ribosomal subunit protein uS7 (156 aa).

Belongs to the universal ribosomal protein uS7 family. As to quaternary structure, part of the 30S ribosomal subunit. Contacts proteins S9 and S11.

In terms of biological role, one of the primary rRNA binding proteins, it binds directly to 16S rRNA where it nucleates assembly of the head domain of the 30S subunit. Is located at the subunit interface close to the decoding center, probably blocks exit of the E-site tRNA. This Pasteurella multocida (strain Pm70) protein is Small ribosomal subunit protein uS7.